A 67-amino-acid chain; its full sequence is uncharacterized protein (67 aa).

The next 2 helical transmembrane spans lie at 10–30 (EFFI…IIMW) and 40–60 (LMVG…WMVF).

Belongs to the plectrovirus ORF10 family.

The protein resides in the host membrane. This is an uncharacterized protein from Spiroplasma melliferum (SpV1).